The primary structure comprises 149 residues: 4-hydroxyphenylacetate 3-monooxygenase, reductase component (149 aa).

An FAD-binding site is contributed by 27-34; it reads ERGMTATA. Serine 37 is a binding site for NAD(+). FAD-binding positions include 48 to 50, 54 to 55, and histidine 80; these read AVS and KL. Residues histidine 116 and 137–140 contribute to the NAD(+) site; that span reads YFQR.

It belongs to the non-flavoprotein flavin reductase family. HpaC subfamily. In terms of assembly, homodimer. 4-HPA 3-monooxygenase consists of a reductase component HpaC and an oxygenase component HpaB.

The enzyme catalyses a reduced flavin + NAD(+) = an oxidized flavin + NADH + 2 H(+). It functions in the pathway aromatic compound metabolism; 4-hydroxyphenylacetate degradation; pyruvate and succinate semialdehyde from 4-hydroxyphenylacetate: step 1/7. Catalyzes the reduction of free flavins (FMN, FAD and riboflavin) by NADH. Subsequently, the reduced flavins diffuse to the large HpaB component. It utilizes NADH, but not NADPH as an electron donor, and both FAD and FMN as electron acceptors. This is 4-hydroxyphenylacetate 3-monooxygenase, reductase component from Thermus thermophilus (strain ATCC 27634 / DSM 579 / HB8).